Reading from the N-terminus, the 169-residue chain is Proepiregulin (169 aa).

An N-terminal signal peptide occupies residues 1 to 29; sequence MTAGRRMEMLCAGRVPALLLCLGFHLLQA. A propeptide spanning residues 30 to 62 is cleaved from the precursor; that stretch reads VLSTTVIPSCIPGESSDNCTALVQTEDNPRVAQ. Asparagine 47 carries N-linked (GlcNAc...) asparagine glycosylation. The Extracellular segment spans residues 60 to 119; it reads VAQVSITKCSSDMNGYCLHGQCIYLVDMSQNYCRCEVGYTGVRCEHFFLTVHQPLSKEYV. Residues 64–104 enclose the EGF-like domain; that stretch reads SITKCSSDMNGYCLHGQCIYLVDMSQNYCRCEVGYTGVRCE. Intrachain disulfides connect cysteine 68-cysteine 81, cysteine 76-cysteine 92, and cysteine 94-cysteine 103. Positions 109 to 169 are cleaved as a propeptide — removed in mature form; it reads TVHQPLSKEY…TSGDPELPQV (61 aa). Residues 120–140 traverse the membrane as a helical segment; that stretch reads ALTVILIILFLITVVGSTYYF. Over 141–169 the chain is Cytoplasmic; sequence CRWYRNRKSKEPKKEYERVTSGDPELPQV.

Interacts with EGFR and ERBB4. In terms of tissue distribution, in normal adults, expressed predominantly in the placenta and peripheral blood leukocytes. High levels were detected in carcinomas of the bladder, lung, kidney and colon.

It is found in the secreted. It localises to the extracellular space. Its subcellular location is the cell membrane. Ligand of the EGF receptor/EGFR and ERBB4. Stimulates EGFR and ERBB4 tyrosine phosphorylation. Contributes to inflammation, wound healing, tissue repair, and oocyte maturation by regulating angiogenesis and vascular remodeling and by stimulating cell proliferation. This Homo sapiens (Human) protein is Proepiregulin (EREG).